The primary structure comprises 200 residues: Small ribosomal subunit protein uS4c (200 aa).

A disordered region spans residues G20–P42. The span at R23–T37 shows a compositional bias: polar residues. The 63-residue stretch at M90–Y152 folds into the S4 RNA-binding domain.

This sequence belongs to the universal ribosomal protein uS4 family. Part of the 30S ribosomal subunit. Contacts protein S5. The interaction surface between S4 and S5 is involved in control of translational fidelity.

The protein resides in the plastid. It localises to the chloroplast. In terms of biological role, one of the primary rRNA binding proteins, it binds directly to 16S rRNA where it nucleates assembly of the body of the 30S subunit. Functionally, with S5 and S12 plays an important role in translational accuracy. The sequence is that of Small ribosomal subunit protein uS4c (rps4) from Guillardia theta (Cryptophyte).